We begin with the raw amino-acid sequence, 236 residues long: Small ribosomal subunit protein uS2c (236 aa).

Belongs to the universal ribosomal protein uS2 family.

It is found in the plastid. The protein localises to the chloroplast. This is Small ribosomal subunit protein uS2c (rps2) from Populus alba (White poplar).